The following is a 189-amino-acid chain: MSKPTREEAKEAVRTLLKFIGEDPSREGLLKTPDRVINSYAEIFSGYGKDVAEILNTKFYETCNFRDFILLNIKFTSFCEHHILPFNGTVDIAYVPDNCIVGISKLARIVNIFARRLQIQEKMTVQIAESVQENLKPLGVAVKISAVHSCMSMRGVMQDNSVMNTMHYTGIFAEQQKYRHEFLNFTAKR.

Residues C79, H82, and C150 each coordinate Zn(2+).

It belongs to the GTP cyclohydrolase I family. In terms of assembly, homomer.

It carries out the reaction GTP + H2O = 7,8-dihydroneopterin 3'-triphosphate + formate + H(+). It functions in the pathway cofactor biosynthesis; 7,8-dihydroneopterin triphosphate biosynthesis; 7,8-dihydroneopterin triphosphate from GTP: step 1/1. The protein is GTP cyclohydrolase 1 of Rickettsia peacockii (strain Rustic).